The primary structure comprises 110 residues: Nucleoid-associated protein PsycPRwf_1729 (110 aa).

The protein belongs to the YbaB/EbfC family. In terms of assembly, homodimer.

It localises to the cytoplasm. Its subcellular location is the nucleoid. Binds to DNA and alters its conformation. May be involved in regulation of gene expression, nucleoid organization and DNA protection. This is Nucleoid-associated protein PsycPRwf_1729 from Psychrobacter sp. (strain PRwf-1).